The following is a 414-amino-acid chain: Histidine--tRNA ligase (414 aa).

The protein belongs to the class-II aminoacyl-tRNA synthetase family. Homodimer.

The protein localises to the cytoplasm. It carries out the reaction tRNA(His) + L-histidine + ATP = L-histidyl-tRNA(His) + AMP + diphosphate + H(+). The protein is Histidine--tRNA ligase of Endomicrobium trichonymphae.